Reading from the N-terminus, the 154-residue chain is Myoglobin (154 aa).

Residues 2-148 enclose the Globin domain; sequence GLSDGEWQLV…FRNDMAAKYK (147 aa). The residue at position 4 (serine 4) is a Phosphoserine. Nitrite is bound at residue histidine 65. Histidine 65 contributes to the O2 binding site. Threonine 68 carries the post-translational modification Phosphothreonine. Histidine 94 serves as a coordination point for heme b.

It belongs to the globin family. In terms of assembly, monomeric.

The protein resides in the cytoplasm. Its subcellular location is the sarcoplasm. The catalysed reaction is Fe(III)-heme b-[protein] + nitric oxide + H2O = Fe(II)-heme b-[protein] + nitrite + 2 H(+). The enzyme catalyses H2O2 + AH2 = A + 2 H2O. Monomeric heme protein which primary function is to store oxygen and facilitate its diffusion within muscle tissues. Reversibly binds oxygen through a pentacoordinated heme iron and enables its timely and efficient release as needed during periods of heightened demand. Depending on the oxidative conditions of tissues and cells, and in addition to its ability to bind oxygen, it also has a nitrite reductase activity whereby it regulates the production of bioactive nitric oxide. Under stress conditions, like hypoxia and anoxia, it also protects cells against reactive oxygen species thanks to its pseudoperoxidase activity. This is Myoglobin (MB) from Macaca fascicularis (Crab-eating macaque).